Here is a 637-residue protein sequence, read N- to C-terminus: Nuclear receptor-binding protein homolog (637 aa).

Residues 1–14 (MSNSQANAGISGST) are compositionally biased toward polar residues. 2 disordered regions span residues 1-60 (MSNS…TADA) and 74-99 (SEGV…ILEE). Residues 36-46 (PAATPPSQSTQ) are compositionally biased toward low complexity. A compositionally biased stretch (acidic residues) spans 88–98 (DDSEDESEILE). Positions 109 to 375 (REEVDQRDVP…ANDLLFHPLL (267 aa)) constitute a Protein kinase domain. Disordered stretches follow at residues 465–489 (PNFR…EPVD) and 617–637 (PQEQ…TTSN). A phosphoserine mark is found at Ser473, Ser479, and Ser482. Thr484 bears the Phosphothreonine mark.

The protein belongs to the protein kinase superfamily. Ser/Thr protein kinase family.

It localises to the cytoplasm. The protein localises to the cell cortex. Functionally, may play a role in subcellular trafficking between the endoplasmic reticulum and Golgi apparatus. The protein is Nuclear receptor-binding protein homolog of Drosophila melanogaster (Fruit fly).